The chain runs to 234 residues: MQFSPPLQRATLIQRYKRFLADVITPDGTELTLHCPNTGAMTGCATPGDTVWYSTSENTKRKYPHTWELTQTRTGALICVNTLWANRLTKEAIQNEQLSELSGYSLLKSEVKYGAERSRIDFMLQADSRPDCYIEVKSVTLAEQEYGYFPDAVTLRGQKHLRELMSVAAEGHRAVVLFAVLHSAITRFSPARHIDAKYAQLLIEAQLKGVEILVYKAELSAEGMTLKEPLPMTL.

It belongs to the SfsA family.

This is Sugar fermentation stimulation protein homolog from Citrobacter koseri (strain ATCC BAA-895 / CDC 4225-83 / SGSC4696).